A 663-amino-acid polypeptide reads, in one-letter code: Pyoverdine export ATP-binding/permease protein PvdT (663 aa).

The 240-residue stretch at 11 to 250 (IELRDIRKRY…PSAGVERHLQ (240 aa)) folds into the ABC transporter domain. 48–55 (GASGSGKS) is a binding site for ATP. 4 helical membrane-spanning segments follow: residues 292-312 (ALTLLGIIIGVASVVVMLAVG), 545-565 (IAAISLLVGGIGVMNIMLMTV), 598-618 (VVGGLAGIALALCIGGVLLLG), and 626-646 (LSAIVGAFSCALVTGLVFGFM).

This sequence belongs to the ABC transporter superfamily. Macrolide exporter (TC 3.A.1.122) family. As to quaternary structure, part of the tripartite efflux system PvdRT-OpmQ, which is composed of an inner membrane component with both ATPase and permease domains, PvdT, a periplasmic membrane fusion protein, PvdR, and an outer membrane component, OpmQ.

Its subcellular location is the cell inner membrane. Functionally, part of the tripartite efflux system PvdRT-OpmQ required for the secretion into the extracellular milieu of the siderophore pyoverdine (PVD), which is involved in iron acquisition. This subunit binds PVD and drives its secretion by hydrolyzing ATP. The system is responsible for export of newly synthesized PVD after the final steps of biosynthesis have taken place in the periplasm. It is also responsible for recycling of PVD after internalization of ferri-PVD into the periplasm by the outer-membrane receptor FpvA and release of iron from PVD, thus making PVD available for new cycles of iron uptake. In addition, can expel unwanted metals complexed with PVD from the periplasm into the extracellular medium. The sequence is that of Pyoverdine export ATP-binding/permease protein PvdT from Pseudomonas aeruginosa (strain ATCC 15692 / DSM 22644 / CIP 104116 / JCM 14847 / LMG 12228 / 1C / PRS 101 / PAO1).